The sequence spans 443 residues: Probable lipase C16A3.12c (443 aa).

The Cytoplasmic portion of the chain corresponds to 1–16 (MSGFNKNQIYWGDYVG). A helical; Signal-anchor for type II membrane protein transmembrane segment spans residues 17–37 (VIAAFVGVYTELVARIFIYMI). Residues 38–443 (PERVREWFRV…KHFVKQNGFH (406 aa)) are Lumenal-facing. The region spanning 116 to 410 (VVYCHHGLMT…HYEHLDFLWG (295 aa)) is the AB hydrolase-1 domain. N-linked (GlcNAc...) asparagine glycosylation is found at asparagine 134 and asparagine 177. The active-site Nucleophile is the serine 210. Residues asparagine 304 and asparagine 335 are each glycosylated (N-linked (GlcNAc...) asparagine). Active-site charge relay system residues include aspartate 378 and histidine 404.

The protein belongs to the AB hydrolase superfamily. Lipase family.

It is found in the cytoplasm. The protein resides in the vacuole. Its subcellular location is the membrane. Functionally, probable lipase. This chain is Probable lipase C16A3.12c, found in Schizosaccharomyces pombe (strain 972 / ATCC 24843) (Fission yeast).